A 133-amino-acid chain; its full sequence is ATP synthase epsilon chain (133 aa).

Belongs to the ATPase epsilon chain family. F-type ATPases have 2 components, CF(1) - the catalytic core - and CF(0) - the membrane proton channel. CF(1) has five subunits: alpha(3), beta(3), gamma(1), delta(1), epsilon(1). CF(0) has three main subunits: a, b and c.

It is found in the cell membrane. Functionally, produces ATP from ADP in the presence of a proton gradient across the membrane. In Clostridium perfringens (strain SM101 / Type A), this protein is ATP synthase epsilon chain.